The following is a 157-amino-acid chain: UPF0225 protein Psyr_3863 (157 aa).

It belongs to the UPF0225 family.

The sequence is that of UPF0225 protein Psyr_3863 from Pseudomonas syringae pv. syringae (strain B728a).